The sequence spans 409 residues: Peptidase T (409 aa).

His78 contributes to the Zn(2+) binding site. Residue Asp80 is part of the active site. Asp141 is a binding site for Zn(2+). Residue Glu175 is the Proton acceptor of the active site. Zn(2+) is bound by residues Glu176, Asp198, and His380.

The protein belongs to the peptidase M20B family. The cofactor is Zn(2+).

It is found in the cytoplasm. It carries out the reaction Release of the N-terminal residue from a tripeptide.. Its function is as follows. Cleaves the N-terminal amino acid of tripeptides. The sequence is that of Peptidase T from Caldanaerobacter subterraneus subsp. tengcongensis (strain DSM 15242 / JCM 11007 / NBRC 100824 / MB4) (Thermoanaerobacter tengcongensis).